Here is a 227-residue protein sequence, read N- to C-terminus: ATP synthase F(0) complex subunit a (227 aa).

6 consecutive transmembrane segments (helical) span residues 9–29 (FASP…LPWV), 69–89 (WALL…LGLL), 98–118 (QLSL…IIGM), 132–152 (EGTP…SLFI), 165–185 (LTAG…LMPM), and 190–210 (AILT…VAMI).

It belongs to the ATPase A chain family. In terms of assembly, component of the ATP synthase complex composed at least of ATP5F1A/subunit alpha, ATP5F1B/subunit beta, ATP5MC1/subunit c (homooctomer), MT-ATP6/subunit a, MT-ATP8/subunit 8, ATP5ME/subunit e, ATP5MF/subunit f, ATP5MG/subunit g, ATP5MK/subunit k, ATP5MJ/subunit j, ATP5F1C/subunit gamma, ATP5F1D/subunit delta, ATP5F1E/subunit epsilon, ATP5PF/subunit F6, ATP5PB/subunit b, ATP5PD/subunit d, ATP5PO/subunit OSCP. ATP synthase complex consists of a soluble F(1) head domain (subunits alpha(3) and beta(3)) - the catalytic core - and a membrane F(0) domain - the membrane proton channel (subunits c, a, 8, e, f, g, k and j). These two domains are linked by a central stalk (subunits gamma, delta, and epsilon) rotating inside the F1 region and a stationary peripheral stalk (subunits F6, b, d, and OSCP). Interacts with DNAJC30; interaction is direct.

Its subcellular location is the mitochondrion inner membrane. The enzyme catalyses H(+)(in) = H(+)(out). Its function is as follows. Subunit a, of the mitochondrial membrane ATP synthase complex (F(1)F(0) ATP synthase or Complex V) that produces ATP from ADP in the presence of a proton gradient across the membrane which is generated by electron transport complexes of the respiratory chain. ATP synthase complex consist of a soluble F(1) head domain - the catalytic core - and a membrane F(1) domain - the membrane proton channel. These two domains are linked by a central stalk rotating inside the F(1) region and a stationary peripheral stalk. During catalysis, ATP synthesis in the catalytic domain of F(1) is coupled via a rotary mechanism of the central stalk subunits to proton translocation. With the subunit c (ATP5MC1), forms the proton-conducting channel in the F(0) domain, that contains two crucial half-channels (inlet and outlet) that facilitate proton movement from the mitochondrial intermembrane space (IMS) into the matrix. Protons are taken up via the inlet half-channel and released through the outlet half-channel, following a Grotthuss mechanism. In Carassius auratus (Goldfish), this protein is ATP synthase F(0) complex subunit a.